Consider the following 311-residue polypeptide: Formimidoylglutamase (311 aa).

Mn(2+) contacts are provided by His130, Asp155, His157, Asp159, Cys242, and Asp244.

It belongs to the arginase family. It depends on Mn(2+) as a cofactor.

It carries out the reaction N-formimidoyl-L-glutamate + H2O = formamide + L-glutamate. It functions in the pathway amino-acid degradation; L-histidine degradation into L-glutamate; L-glutamate from N-formimidoyl-L-glutamate (hydrolase route): step 1/1. In terms of biological role, catalyzes the conversion of N-formimidoyl-L-glutamate to L-glutamate and formamide. This Staphylococcus aureus (strain bovine RF122 / ET3-1) protein is Formimidoylglutamase.